The sequence spans 221 residues: UPF0758 protein YicR (221 aa).

Residues 99–221 enclose the MPN domain; it reads ALLSPEMTRE…YVSFAERGWI (123 aa). The Zn(2+) site is built by His170, His172, and Asp183. Residues 170–183 carry the JAMM motif motif; it reads HNHPSGCAEPSKAD.

Belongs to the UPF0758 family. YicR subfamily.

In Salmonella agona (strain SL483), this protein is UPF0758 protein YicR.